Consider the following 399-residue polypeptide: MKHLQKKNSKNPKKIEEKYNTRNSYFILYDRALVWLTLGLFSVGLIMVISTSIPISQKIYHNPLFFIKREIFYFFLIFLLSFIFLRTPIIFWEKNSNIILIISIVLLVLVLLIGHSIHGSFRWINIGFLHIQPSEICKISSFCYLASYLSRKSNEVRNNFWGFFKPMSVIITQSMLLLAEPDLGTVVVLFFTTISVLFLSGAKIGQFFIIITVSILTIILLILLEPYRIKRVLSFWNPWEDPFGNGYQLTQSLIALGRGNFLGQGLGNSIQKLDYLPDAHSDFIFSIIGEELGYIGSFLILLIIFTISFRAMYIGQKALEKKQIFSGFLACSIGIWLSFQTSINVGSVTGILPTKGLTLPFISYGGSSLIINSIAIFFLLRIDFETRLKTSQAFPRGPK.

The next 9 helical transmembrane spans lie at 33-53 (LVWL…STSI), 71-91 (IFYF…PIIF), 98-118 (IILI…HSIH), 160-180 (FWGF…LLAE), 182-202 (DLGT…LSGA), 204-224 (IGQF…LILL), 287-307 (IIGE…IFTI), 324-344 (IFSG…TSIN), and 359-379 (LPFI…IFFL).

It belongs to the SEDS family. FtsW subfamily.

The protein resides in the cell inner membrane. The enzyme catalyses [GlcNAc-(1-&gt;4)-Mur2Ac(oyl-L-Ala-gamma-D-Glu-L-Lys-D-Ala-D-Ala)](n)-di-trans,octa-cis-undecaprenyl diphosphate + beta-D-GlcNAc-(1-&gt;4)-Mur2Ac(oyl-L-Ala-gamma-D-Glu-L-Lys-D-Ala-D-Ala)-di-trans,octa-cis-undecaprenyl diphosphate = [GlcNAc-(1-&gt;4)-Mur2Ac(oyl-L-Ala-gamma-D-Glu-L-Lys-D-Ala-D-Ala)](n+1)-di-trans,octa-cis-undecaprenyl diphosphate + di-trans,octa-cis-undecaprenyl diphosphate + H(+). The protein operates within cell wall biogenesis; peptidoglycan biosynthesis. In terms of biological role, peptidoglycan polymerase that is essential for cell division. This Buchnera aphidicola subsp. Acyrthosiphon pisum (strain APS) (Acyrthosiphon pisum symbiotic bacterium) protein is Probable peptidoglycan glycosyltransferase FtsW.